The chain runs to 361 residues: 3-dehydroquinate synthase (361 aa).

NAD(+) is bound by residues 60 to 65 (DAEAAK), 94 to 98 (GATTD), 118 to 119 (TT), lysine 131, and lysine 140. Residues glutamate 173, histidine 242, and histidine 258 each contribute to the Zn(2+) site.

Belongs to the sugar phosphate cyclases superfamily. Dehydroquinate synthase family. The cofactor is Co(2+). Zn(2+) is required as a cofactor. It depends on NAD(+) as a cofactor.

The protein localises to the cytoplasm. It catalyses the reaction 7-phospho-2-dehydro-3-deoxy-D-arabino-heptonate = 3-dehydroquinate + phosphate. Its pathway is metabolic intermediate biosynthesis; chorismate biosynthesis; chorismate from D-erythrose 4-phosphate and phosphoenolpyruvate: step 2/7. Its function is as follows. Catalyzes the conversion of 3-deoxy-D-arabino-heptulosonate 7-phosphate (DAHP) to dehydroquinate (DHQ). The chain is 3-dehydroquinate synthase from Cutibacterium acnes (strain DSM 16379 / KPA171202) (Propionibacterium acnes).